The following is a 474-amino-acid chain: Bifunctional protein HldE (474 aa).

The ribokinase stretch occupies residues 1–317 (MKLSMPRFDR…RRAVQREQGS (317 aa)). An ATP-binding site is contributed by 194-197 (NLAE). Residue Asp263 is part of the active site. The tract at residues 343-474 (FTNGCFDILH…GIVEKIRRQP (132 aa)) is cytidylyltransferase.

The protein in the N-terminal section; belongs to the carbohydrate kinase PfkB family. It in the C-terminal section; belongs to the cytidylyltransferase family. Homodimer.

It catalyses the reaction D-glycero-beta-D-manno-heptose 7-phosphate + ATP = D-glycero-beta-D-manno-heptose 1,7-bisphosphate + ADP + H(+). It carries out the reaction D-glycero-beta-D-manno-heptose 1-phosphate + ATP + H(+) = ADP-D-glycero-beta-D-manno-heptose + diphosphate. The protein operates within nucleotide-sugar biosynthesis; ADP-L-glycero-beta-D-manno-heptose biosynthesis; ADP-L-glycero-beta-D-manno-heptose from D-glycero-beta-D-manno-heptose 7-phosphate: step 1/4. Its pathway is nucleotide-sugar biosynthesis; ADP-L-glycero-beta-D-manno-heptose biosynthesis; ADP-L-glycero-beta-D-manno-heptose from D-glycero-beta-D-manno-heptose 7-phosphate: step 3/4. In terms of biological role, catalyzes the phosphorylation of D-glycero-D-manno-heptose 7-phosphate at the C-1 position to selectively form D-glycero-beta-D-manno-heptose-1,7-bisphosphate. Catalyzes the ADP transfer from ATP to D-glycero-beta-D-manno-heptose 1-phosphate, yielding ADP-D-glycero-beta-D-manno-heptose. The polypeptide is Bifunctional protein HldE (Azotobacter vinelandii (strain DJ / ATCC BAA-1303)).